We begin with the raw amino-acid sequence, 803 residues long: MIPVTEFRQFSEQQPAFRVLKPWWDVFTDYLSVAMLMIGVFGCTLQVMQDKIICLPKRVQPAQNHSSVPNVSQAVISTTPLPPPKPSPTNPATVEMKGLKTDLDLQQYSFINQMCYERALHWYAKYFPYLVLIHTLVFMLCSNFWFKFPGSSSKIEHFISILGKCFDSPWTTRALSEVSGEDSEEKDNRKNNMNRSGTIQSGPEGNLVRSQSLKSIPEKFVVDKSAAGALDKKEGEQAKALFEKVKKFRLHVEEGDILYAMYVRQTVLKVIKFLIIIAYNSALVSKVQFTVDCNVDIQDMTGYKNFSCNHTMAHLFSKLSFCYLCFVSIYGLTCLYTLYWLFYRSLREYSFEYVRQETGIDDIPDVKNDFAFMLHMIDQYDPLYSKRFAVFLSEVSENKLKQLNLNNEWTPDKLRQKLQTNAHNRLELPLIMLSGLPDTVFEITELQSLKLEIIKNVMIPATIAQLDNLQELCLHQCSVKIHSAALSFLKENLKVLSVKFDDMRELPPWMYGLRNLEELYLVGSLSHDISKNVTLESLRDLKSLKILSIKSNVSKIPQAVVDVSSHLQKMCVHNDGTKLVMLNNLKKMTNLTELELVHCDLERIPHAVFSLLSLQELDLKENNLKSIEEIVSFQHLRKLTVLKLWYNSIAYIPEHIKKLTSLERLFFSHNKVEVLPSHLFLCNKIRYLDLSYNDIRFIPPEIGVLQSLQYFSITCNKVESLPDELYFCKKLKTLKIGKNSLSVLSPKIGNLLFLSYLDIKGNHFEVLPPELGDCRALKRAGLVVEDALFETLPSDVREQMKAD.

The Cytoplasmic segment spans residues 1-22; sequence MIPVTEFRQFSEQQPAFRVLKP. A helical membrane pass occupies residues 23-48; that stretch reads WWDVFTDYLSVAMLMIGVFGCTLQVM. Over 49-124 the chain is Extracellular; that stretch reads QDKIICLPKR…CYERALHWYA (76 aa). 2 cysteine pairs are disulfide-bonded: Cys54–Cys308 and Cys115–Cys293. A helical transmembrane segment spans residues 125-144; that stretch reads KYFPYLVLIHTLVFMLCSNF. The Cytoplasmic segment spans residues 145–262; it reads WFKFPGSSSK…EEGDILYAMY (118 aa). The tract at residues 177-206 is disordered; it reads EVSGEDSEEKDNRKNNMNRSGTIQSGPEGN. The span at 191–206 shows a compositional bias: polar residues; the sequence is NNMNRSGTIQSGPEGN. A phosphoserine mark is found at Ser212 and Ser215. The chain crosses the membrane as a helical span at residues 263–284; sequence VRQTVLKVIKFLIIIAYNSALV. Residues 285-314 lie on the Extracellular side of the membrane; the sequence is SKVQFTVDCNVDIQDMTGYKNFSCNHTMAH. The chain crosses the membrane as a helical span at residues 315 to 339; that stretch reads LFSKLSFCYLCFVSIYGLTCLYTLY. Residues 340–803 lie on the Cytoplasmic side of the membrane; the sequence is WLFYRSLREY…SDVREQMKAD (464 aa). LRR repeat units follow at residues 409–420, 421–443, 446–466, 467–488, 490–513, 515–537, 541–563, 566–586, 588–611, 613–635, 637–659, 660–682, 684–705, 706–728, 730–751, 752–774, and 776–799; these read WTPDKLRQKLQT, NAHN…VFEI, LQSL…IAQL, DNLQ…ALSF, KENL…MYGL, NLEE…TLES, LKSL…VVDV, HLQK…NNLK, MTNL…VFSL, SLQE…SFQH, RKLT…IKKL, TSLE…LFLC, KIRY…IGVL, QSLQ…LYFC, KLKT…IGNL, LFLS…LGDC, and ALKR…VREQ.

This sequence belongs to the LRRC8 family. As to quaternary structure, heterohexamer; oligomerizes with other LRRC8 proteins (LRRC8A, LRRC8B, LRRC8D and/or LRRC8E) to form a heterohexamer. Homoheptamer; inactive, likely because it is not targeted to the plasma membrane in the absence of LRRC8A. In vivo, the subunit composition may depend primarily on expression levels, and heterooligomeric channels containing various proportions of the different LRRC8 proteins may coexist. As to expression, expressed at very low levels in adipose tissue.

Its subcellular location is the cell membrane. It localises to the endoplasmic reticulum membrane. The catalysed reaction is chloride(in) = chloride(out). The enzyme catalyses iodide(out) = iodide(in). It carries out the reaction taurine(out) = taurine(in). It catalyses the reaction 2',3'-cGAMP(out) = 2',3'-cGAMP(in). Its function is as follows. Non-essential component of the volume-regulated anion channel (VRAC, also named VSOAC channel), an anion channel required to maintain a constant cell volume in response to extracellular or intracellular osmotic changes. The VRAC channel conducts iodide better than chloride and can also conduct organic osmolytes like taurine. Plays a redundant role in the efflux of amino acids, such as aspartate and glutamate, in response to osmotic stress. The VRAC channel also mediates transport of immunoreactive cyclic dinucleotide GMP-AMP (2'-3'-cGAMP), an immune messenger produced in response to DNA virus in the cytosol. Channel activity requires LRRC8A plus at least one other family member (LRRC8B, LRRC8C, LRRC8D or LRRC8E); channel characteristics depend on the precise subunit composition. May play a role in adipogenesis. The chain is Volume-regulated anion channel subunit LRRC8C from Mus musculus (Mouse).